The following is a 70-amino-acid chain: Consomatin Mrc3 (70 aa).

The first 22 residues, 1–22 (MQTAYWVMVMMMVWITAPLSEG), serve as a signal peptide directing secretion. The propeptide occupies 23–55 (GKLNDVIRGLVPDDVTPKRILQSLISRRRFDGR). The cysteines at positions 62 and 67 are disulfide-linked. Tryptophan 64 is subject to D-tryptophan. Proline 68 carries the 4-hydroxyproline modification. Tyrosine 69 carries the post-translational modification Tyrosine amide.

The protein belongs to the conotoxin C superfamily. Consomatin family. In terms of tissue distribution, expressed by the venom duct.

The protein resides in the secreted. Functionally, moderately activates human somatostatin receptors (SSTR) with a preferential activation of SSTR1 and SSTR4. In vivo, does not cause behavioral changes in mice within a few minutes of intracranial injection, but causes a progressive loss of movement thereafter. Four to five hours after injection, mice recover, even with the highest dose tested. Shows antinociception and antihyperalgesia activities in two mouse models of acute pain, most probably by acting outside the central nervous system. This chain is Consomatin Mrc3, found in Conus mercator (Trader cone).